The sequence spans 307 residues: Transcription initiation factor IIB (307 aa).

The TFIIB-type zinc finger occupies 11–42; the sequence is FTEECPACGSAEIVFDEERGEYVCANCGLVTE. Positions 15, 18, 34, and 37 each coordinate Zn(2+). The disordered stretch occupies residues 48–69; it reads PGPEWRHFNPDQRQRRSRTGEP. Over residues 50–69 the composition is skewed to basic and acidic residues; sequence PEWRHFNPDQRQRRSRTGEP. A run of 2 repeats spans residues 123 to 207 and 218 to 299.

This sequence belongs to the TFIIB family.

In terms of biological role, stabilizes TBP binding to an archaeal box-A promoter. Also responsible for recruiting RNA polymerase II to the pre-initiation complex (DNA-TBP-TFIIB). This Methanopyrus kandleri (strain AV19 / DSM 6324 / JCM 9639 / NBRC 100938) protein is Transcription initiation factor IIB.